The sequence spans 743 residues: GTPase-activating protein gyp7 (743 aa).

A Rab-GAP TBC domain is found at 411–633; it reads GIQPSLRKEV…KLWDVLFTNY (223 aa).

It is found in the cytoplasm. The protein resides in the nucleus. Its function is as follows. Most effectively accelerates the intrinsic GTPase activity of ypt7. The polypeptide is GTPase-activating protein gyp7 (Schizosaccharomyces pombe (strain 972 / ATCC 24843) (Fission yeast)).